A 563-amino-acid chain; its full sequence is DNA polymerase III subunit tau (563 aa).

45 to 52 (GPRGTGKT) is a binding site for ATP. Zn(2+)-binding residues include Cys64, Cys73, Cys76, and Cys79.

It belongs to the DnaX/STICHEL family. As to quaternary structure, component of the DNA clamp loading complex consisting of tau(3):delta(1):delta'(1). The DNA polymerase III holoenzyme complex contains at least 10 different subunits organized into 3 functionally essential subassemblies: the Pol III core, the beta sliding clamp processivity factor and the clamp-loading complex. The Pol III core (subunits alpha, epsilon and theta) contains the polymerase and the 3'-5' exonuclease proofreading activities. The polymerase is tethered to the template via the dimeric beta sliding clamp processivity factor. The DNA clamp-loading complex assembles the beta sliding clamp onto the primed template and plays a central role in the organization and communication at the replication fork. Forms a complex with replicative DNA helicase DnaB (shown with G.stearothermophilus DnaB) tau(3):DnaB(6); a single ATP hydrolysis even is sufficient for complex formation. Colocalizes with DNA helicases PriA, RecQ and RecS.

The protein localises to the cytoplasm. The protein resides in the nucleoid. The catalysed reaction is DNA(n) + a 2'-deoxyribonucleoside 5'-triphosphate = DNA(n+1) + diphosphate. Part of the beta sliding clamp loading complex, which hydrolyzes ATP to load the beta clamp onto primed DNA to form the DNA replication pre-initiation complex. DNA polymerase III is a complex, multichain enzyme responsible for most of the replicative DNA synthesis in bacteria. This Bacillus subtilis (strain 168) protein is DNA polymerase III subunit tau.